Here is a 400-residue protein sequence, read N- to C-terminus: Lysophospholipid transporter LplT (400 aa).

12 consecutive transmembrane segments (helical) span residues 19–39 (VIVA…ATLA), 53–73 (VLQM…GQIA), 91–111 (AGAA…LVGI), 139–159 (LMEA…GVLA), 164–184 (IAAL…NLFI), 195–213 (SWRL…VVLW), 227–247 (LFWG…PVAL), 257–277 (YLNA…AKLV), 281–301 (TVSR…IFSL), 304–324 (ALLP…FFVV), 352–372 (NSAM…GVPA), and 373–393 (VAIG…LWIW).

The protein belongs to the major facilitator superfamily. LplT (TC 2.A.1.42) family.

It localises to the cell inner membrane. Catalyzes the facilitated diffusion of 2-acyl-glycero-3-phosphoethanolamine (2-acyl-GPE) into the cell. This chain is Lysophospholipid transporter LplT, found in Salmonella agona (strain SL483).